Here is a 423-residue protein sequence, read N- to C-terminus: Polyglutamylase complex subunit TTLL1 (423 aa).

Residues 1–367 enclose the TTL domain; it reads MAGRVKWVTD…NGEIPDCKWN (367 aa). ATP-binding positions include lysine 138, 144–145, 181–184, and 194–196; these read QG, SVYI, and KFD. A protein is bound at residue glutamine 144. Arginine 220 contacts L-glutamate. Residue 241-242 participates in ATP binding; the sequence is TN. Residue lysine 259 participates in L-glutamate binding. Positions 313, 326, and 328 each coordinate Mg(2+). Lysine 344 provides a ligand contact to L-glutamate. Residues 390 to 423 are disordered; it reads DGAERELRNRPGQPVGPRAGRSRDSGRSVLTTWK.

Belongs to the tubulin polyglutamylase family. As to quaternary structure, part of the neuronal tubulin polyglutamylase complex which contains TPGS1, TPGS2, TTLL1, LRRC49 and NICN1. Interacts with PCM1, CSTPP1 and LRRC49. Mg(2+) serves as cofactor. Highly expressed in brain, heart and kidney. Expressed in liver, lung, muscle, spleen, testis and trachea. In the brain, expressed in ependymal cilia, cortex, corpus callosum and striatum. Expressed in blastomere.

Its subcellular location is the cytoplasm. The protein localises to the cytoskeleton. It is found in the cilium basal body. It localises to the cilium axoneme. The protein resides in the cell projection. Its subcellular location is the cilium. The protein localises to the flagellum. The catalysed reaction is (L-glutamyl)(n)-gamma-L-glutamyl-L-glutamyl-[protein] + L-glutamate + ATP = (L-glutamyl)(n+1)-gamma-L-glutamyl-L-glutamyl-[protein] + ADP + phosphate + H(+). Functionally, catalytic subunit of a polyglutamylase complex which modifies tubulin, generating side chains of glutamate on the gamma-carboxyl group of specific glutamate residues within the C-terminal tail of tubulin. Probably involved in the side-chain elongation step of the polyglutamylation reaction rather than the initiation step. Modifies both alpha- and beta-tubulins with a preference for the alpha-tail. Unlike most polyglutamylases of the tubulin--tyrosine ligase family, only displays a catalytic activity when in complex with other proteins as it is most likely lacking domains important for autonomous activity. Part of the neuronal tubulin polyglutamylase complex. Mediates cilia and flagella polyglutamylation which is essential for their biogenesis and motility. Involved in respiratory motile cilia function through the regulation of beating asymmetry. Essential for sperm flagella biogenesis, motility and male fertility. Also mediates glutamylation of non-tubulin proteins. Involved in KLF4 glutamylation which impedes its ubiquitination, thereby leading to somatic cell reprogramming, pluripotency maintenance and embryogenesis. The polypeptide is Polyglutamylase complex subunit TTLL1 (Mus musculus (Mouse)).